The sequence spans 38 residues: Photosystem II reaction center protein L (38 aa).

The chain crosses the membrane as a helical span at residues 17–37; the sequence is SLYWGLLLIFVLAVPFSNYFF.

Belongs to the PsbL family. As to quaternary structure, PSII is composed of 1 copy each of membrane proteins PsbA, PsbB, PsbC, PsbD, PsbE, PsbF, PsbH, PsbI, PsbJ, PsbK, PsbL, PsbM, PsbT, PsbX, PsbY, PsbZ, Psb30/Ycf12, at least 3 peripheral proteins of the oxygen-evolving complex and a large number of cofactors. It forms dimeric complexes.

It localises to the plastid. It is found in the chloroplast thylakoid membrane. Its function is as follows. One of the components of the core complex of photosystem II (PSII). PSII is a light-driven water:plastoquinone oxidoreductase that uses light energy to abstract electrons from H(2)O, generating O(2) and a proton gradient subsequently used for ATP formation. It consists of a core antenna complex that captures photons, and an electron transfer chain that converts photonic excitation into a charge separation. This subunit is found at the monomer-monomer interface and is required for correct PSII assembly and/or dimerization. The chain is Photosystem II reaction center protein L from Cedrus deodara (Deodar cedar).